Reading from the N-terminus, the 264-residue chain is Teichoic acids export ATP-binding protein TagH (264 aa).

The ABC transporter domain occupies 5–243; that stretch reads VNIKNVTKEY…YEAFLNDFKK (239 aa). 57–64 is an ATP binding site; the sequence is GINGSGKS.

Belongs to the ABC transporter superfamily. Teichoic acids exporter (TC 3.A.1.104.1) family. In terms of assembly, the complex is composed of two ATP-binding proteins (TagH) and two transmembrane proteins (TagG).

It is found in the cell membrane. The catalysed reaction is ATP + H2O + teichoic acidSide 1 = ADP + phosphate + teichoic acidSide 2.. Its function is as follows. Part of the ABC transporter complex TagGH involved in teichoic acids export. Responsible for energy coupling to the transport system. The chain is Teichoic acids export ATP-binding protein TagH from Staphylococcus aureus (strain USA300).